The following is a 512-amino-acid chain: Glutathione-binding protein GsiB (512 aa).

A signal peptide spans methionine 1 to alanine 26.

The protein belongs to the bacterial solute-binding protein 5 family. In terms of assembly, the complex is composed of two ATP-binding proteins (GsiA), two transmembrane proteins (GsiC and GsiD) and a solute-binding protein (GsiB).

Its subcellular location is the periplasm. In terms of biological role, part of the ABC transporter complex GsiABCD involved in glutathione import. Binds glutathione. In Shigella flexneri, this protein is Glutathione-binding protein GsiB.